Reading from the N-terminus, the 116-residue chain is uncharacterized protein (116 aa).

Positions 1 to 19 are cleaved as a signal peptide; that stretch reads MRWDVIILYAISRPYATRR. Residues 18–50 are disordered; it reads RRTGSHTHPRDSRYIAANQRRPPSACRVGPSPA.

This is an uncharacterized protein from Saccharomyces cerevisiae (strain ATCC 204508 / S288c) (Baker's yeast).